The following is a 303-amino-acid chain: Large ribosomal subunit protein uL18 (303 aa).

It belongs to the universal ribosomal protein uL18 family. Component of the large ribosomal subunit (LSU).

The protein localises to the cytoplasm. The protein resides in the nucleus. Component of the ribosome, a large ribonucleoprotein complex responsible for the synthesis of proteins in the cell. The small ribosomal subunit (SSU) binds messenger RNAs (mRNAs) and translates the encoded message by selecting cognate aminoacyl-transfer RNA (tRNA) molecules. The large subunit (LSU) contains the ribosomal catalytic site termed the peptidyl transferase center (PTC), which catalyzes the formation of peptide bonds, thereby polymerizing the amino acids delivered by tRNAs into a polypeptide chain. The nascent polypeptides leave the ribosome through a tunnel in the LSU and interact with protein factors that function in enzymatic processing, targeting, and the membrane insertion of nascent chains at the exit of the ribosomal tunnel. The polypeptide is Large ribosomal subunit protein uL18 (RPL5) (Oikopleura dioica (Tunicate)).